The primary structure comprises 118 residues: Large ribosomal subunit protein bL19 (118 aa).

It belongs to the bacterial ribosomal protein bL19 family.

This protein is located at the 30S-50S ribosomal subunit interface and may play a role in the structure and function of the aminoacyl-tRNA binding site. The chain is Large ribosomal subunit protein bL19 from Geobacter metallireducens (strain ATCC 53774 / DSM 7210 / GS-15).